Here is a 530-residue protein sequence, read N- to C-terminus: Ubiquitin carboxyl-terminal hydrolase 17-like protein 12 (530 aa).

The region spanning 80–375 is the USP domain; that stretch reads AGLQNMGNTC…QAYVLFYIQK (296 aa). The active-site Nucleophile is the C89. H334 serves as the catalytic Proton acceptor. Composition is skewed to basic and acidic residues over residues 382 to 392 and 398 to 412; these read SESVSRGREPR and DTDR…KRDH. 2 disordered regions span residues 382 to 412 and 477 to 530; these read SESV…KRDH and NHHP…LVCQ. Residues 484–495 show a composition bias toward low complexity; the sequence is SSLLKLSSTTPT. Residues 496-505 show a composition bias toward polar residues; the sequence is HQESMNTGTL. Over residues 510 to 524 the composition is skewed to basic residues; that stretch reads GRARRSKGKNKHSKR.

The protein belongs to the peptidase C19 family. USP17 subfamily.

Its subcellular location is the nucleus. It localises to the endoplasmic reticulum. It catalyses the reaction Thiol-dependent hydrolysis of ester, thioester, amide, peptide and isopeptide bonds formed by the C-terminal Gly of ubiquitin (a 76-residue protein attached to proteins as an intracellular targeting signal).. Functionally, deubiquitinating enzyme that removes conjugated ubiquitin from specific proteins to regulate different cellular processes that may include cell proliferation, progression through the cell cycle, apoptosis, cell migration, and the cellular response to viral infection. The sequence is that of Ubiquitin carboxyl-terminal hydrolase 17-like protein 12 (USP17L12) from Homo sapiens (Human).